A 327-amino-acid chain; its full sequence is Ventral anterior homeobox 1 (327 aa).

Residues Met-1 to Gly-34 are compositionally biased toward basic and acidic residues. The segment at Met-1–Thr-41 is disordered. The segment at residues Pro-99 to Gln-158 is a DNA-binding region (homeobox). Low complexity predominate over residues Ala-230–Ala-245. The interval Ala-230–Pro-249 is disordered.

This sequence belongs to the EMX homeobox family.

The protein resides in the nucleus. Functionally, transcription factor that plays a role in establishing dorsal-ventral polarity in the neural retina. The protein is Ventral anterior homeobox 1 (VAX1) of Gallus gallus (Chicken).